The sequence spans 330 residues: Diacylglycerol acyltransferase/mycolyltransferase Ag85A (330 aa).

The N-terminal stretch at 1-42 is a signal peptide; sequence MKFVDRFRGAVAGMLRRLVVEAMGVALLSALIGVVGSAPAEA. 84 to 85 provides a ligand contact to substrate; the sequence is LR. Residues 100–110 form a fibronectin-binding region; sequence FEWYYQSGISV. The cysteines at positions 129 and 134 are disulfide-linked. The substrate site is built by serine 168 and aspartate 196. Catalysis depends on serine 168, which acts as the Nucleophile. Glutamate 272 is an active-site residue. Residues 274–277, lysine 281, and 304–306 each bind substrate; these read LVRT and HSW. Histidine 304 is an active-site residue.

Belongs to the mycobacterial A85 antigen family. As to quaternary structure, homodimer.

It is found in the secreted. It localises to the cell wall. The protein localises to the cytoplasm. It catalyses the reaction an acyl-CoA + a 1,2-diacyl-sn-glycerol = a triacyl-sn-glycerol + CoA. The catalysed reaction is 2 alpha,alpha'-trehalose 6-mycolate = alpha,alpha'-trehalose 6,6'-bismycolate + alpha,alpha-trehalose. Functionally, the antigen 85 proteins (FbpA, FbpB, FbpC) are responsible for the high affinity of mycobacteria for fibronectin, a large adhesive glycoprotein, which facilitates the attachment of M.tuberculosis to murine alveolar macrophages (AMs). They also help to maintain the integrity of the cell wall by catalyzing the transfer of mycolic acids to cell wall arabinogalactan, and through the synthesis of alpha,alpha-trehalose dimycolate (TDM, cord factor). They catalyze the transfer of a mycoloyl residue from one molecule of alpha,alpha-trehalose monomycolate (TMM) to another TMM, leading to the formation of TDM. FbpA mediates triacylglycerol (TAG) formation with long-chain acyl-CoA as the acyl donor and 1,2-dipalmitoyl-sn-glycerol (1,2-dipalmitin) as the acyl acceptor. It has a preference for C26:0-CoA over C18:1-CoA. This is Diacylglycerol acyltransferase/mycolyltransferase Ag85A (fbpA) from Mycobacterium leprae (strain TN).